The primary structure comprises 89 residues: Small ribosomal subunit protein uS15 (89 aa).

Belongs to the universal ribosomal protein uS15 family. Part of the 30S ribosomal subunit. Forms a bridge to the 50S subunit in the 70S ribosome, contacting the 23S rRNA.

One of the primary rRNA binding proteins, it binds directly to 16S rRNA where it helps nucleate assembly of the platform of the 30S subunit by binding and bridging several RNA helices of the 16S rRNA. Functionally, forms an intersubunit bridge (bridge B4) with the 23S rRNA of the 50S subunit in the ribosome. The polypeptide is Small ribosomal subunit protein uS15 (Bifidobacterium adolescentis (strain ATCC 15703 / DSM 20083 / NCTC 11814 / E194a)).